The chain runs to 473 residues: MSMKISEKKFNDRVGDGIQDSFMRGAVSSAQTRLYTNRLKAADELGNWEEWRELGEEIRQHTLENLDYYLMQLSENVSKRGGHVYFAKTKEEAAKYIQDVAKKKQAKKVVKSKSMVTEEISMNHALEEIGCEVLESDLGEYILQVDNDPPSHIIAPALHKNRTQIRNVFKEKLGYENSDDPYEMTKFVRKQLREKFMDAEIGVTGCNFAVANTGSLCLVTNEGNADLVMSIPKTQIAVMGMERMVPTMEELDVLVGLLCRSAVGQKLTSYVTVAGPIQEEEVDGPEEFHLVVVDNGRSQILGSEFRQVLQCIRCAACVNVCPVYRHVGGHSYGSIYSGPIGAVLTPLLGGYNDYKELPYASSLCGACTEACPVKIPLHDLLLKHRQVIVEQEGRAPLAEKLAMKMFSMGASSAALYKMGSKMAPAAMSPFTSGNRVSKGVGPLKNWTDIREFPAPSKERFRDWYKDHKKGGDK.

4Fe-4S ferredoxin-type domains follow at residues 302–332 (GSEF…GHSY) and 351–380 (YNDY…LHDL). Residues Cys-311, Cys-314, Cys-317, Cys-321, Cys-364, Cys-367, and Cys-371 each contribute to the [4Fe-4S] cluster site.

This sequence belongs to the LutB/YkgF family.

In terms of biological role, is involved in L-lactate degradation and allows cells to grow with lactate as the sole carbon source. Has probably a role as an electron transporter during oxidation of L-lactate. The polypeptide is Lactate utilization protein B (Bacillus cereus (strain AH820)).